A 209-amino-acid chain; its full sequence is MGIMTSLRQGDVHRVTAETDVLVRVGLDGCGQCNVSTGVAFLDHMLHQLSSHGLLDLEITATGDTHIDDHHTNEDVGIAVGQALSQALGDRRGIHRFGHFVAPLDEALVQVVLDCSGRPHLSYGLQIPAERIGSYDSELVKEFFVAVVNNSGLTLHIRQLAGTNSHHIVEACFKAFARALRMAIEIDPRRAGAVPSSKGVLEQAGGQKS.

Belongs to the imidazoleglycerol-phosphate dehydratase family.

Its subcellular location is the cytoplasm. It catalyses the reaction D-erythro-1-(imidazol-4-yl)glycerol 3-phosphate = 3-(imidazol-4-yl)-2-oxopropyl phosphate + H2O. Its pathway is amino-acid biosynthesis; L-histidine biosynthesis; L-histidine from 5-phospho-alpha-D-ribose 1-diphosphate: step 6/9. In Prochlorococcus marinus (strain MIT 9313), this protein is Imidazoleglycerol-phosphate dehydratase.